The chain runs to 114 residues: UPF0757 protein YmgG (114 aa).

This sequence belongs to the UPF0757 family.

In Shigella flexneri, this protein is UPF0757 protein YmgG.